The sequence spans 244 residues: Phosphoadenosine 5'-phosphosulfate reductase (244 aa).

Cys239 acts as the Nucleophile; cysteine thiosulfonate intermediate in catalysis.

This sequence belongs to the PAPS reductase family. CysH subfamily.

Its subcellular location is the cytoplasm. It carries out the reaction [thioredoxin]-disulfide + sulfite + adenosine 3',5'-bisphosphate + 2 H(+) = [thioredoxin]-dithiol + 3'-phosphoadenylyl sulfate. It participates in sulfur metabolism; hydrogen sulfide biosynthesis; sulfite from sulfate: step 3/3. Its function is as follows. Catalyzes the formation of sulfite from phosphoadenosine 5'-phosphosulfate (PAPS) using thioredoxin as an electron donor. This chain is Phosphoadenosine 5'-phosphosulfate reductase, found in Escherichia coli (strain K12 / MC4100 / BW2952).